The primary structure comprises 225 residues: UPF0758 protein Sbal223_0402 (225 aa).

Residues 102–224 (VLTNPDLTRD…IVSFAERGWI (123 aa)) form the MPN domain. Zn(2+) is bound by residues H173, H175, and D186. A JAMM motif motif is present at residues 173–186 (HNHPSGIAEPSQAD).

It belongs to the UPF0758 family.

The sequence is that of UPF0758 protein Sbal223_0402 from Shewanella baltica (strain OS223).